The sequence spans 1553 residues: Pre-mRNA cleavage complex 2 protein Pcf11 (1553 aa).

Serine 2 is modified (N-acetylserine). In terms of domain architecture, CID spans 14 to 142 (AREDACRDYQ…ALDVRVNSLD (129 aa)). Serine 120 is modified (phosphoserine). Position 121 is a phosphothreonine (threonine 121). The tract at residues 167–186 (NKSPDEPSTPGTVVSSPSIS) is disordered. 2 positions are modified to phosphoserine: serine 169 and serine 182. The segment covering 174–186 (STPGTVVSSPSIS) has biased composition (low complexity). The stretch at 208-235 (LLAKQKQLLELQQKKLELELEQAKAQLA) forms a coiled coil. Positions 265 to 648 (AVKTPHQVPV…KQQHRLSVDA (384 aa)) are disordered. Lysine 291 is covalently cross-linked (Glycyl lysine isopeptide (Lys-Gly) (interchain with G-Cter in SUMO2)). The span at 308 to 318 (HGKEQSHRKEF) shows a compositional bias: basic and acidic residues. Over residues 321–342 (NTINQSDIKTSKNVPSEKLNSS) the composition is skewed to polar residues. Lysine 329 is covalently cross-linked (Glycyl lysine isopeptide (Lys-Gly) (interchain with G-Cter in SUMO2)). Composition is skewed to basic and acidic residues over residues 343-365 (KQEK…DSKS), 381-422 (HTKD…DVKE), and 428-443 (EKKE…EHRV). A Glycyl lysine isopeptide (Lys-Gly) (interchain with G-Cter in SUMO2) cross-link involves residue lysine 457. Residues 476–487 (STRKRSRSRSPK) are compositionally biased toward basic residues. Phosphoserine is present on residues serine 490, serine 495, serine 510, and serine 512. Basic residues predominate over residues 495 to 509 (SPKRRDRRSPKRRQR). Basic and acidic residues-rich tracts occupy residues 530 to 568 (SHME…DRPQ) and 600 to 616 (SGWE…EHSK). Serine 645 is subject to Phosphoserine. Lysine 654 is covalently cross-linked (Glycyl lysine isopeptide (Lys-Gly) (interchain with G-Cter in SUMO2)). Serine 705 bears the Phosphoserine mark. The tract at residues 707 to 733 (FNDRFPLKRPRYEDSDKPFVDGPASRF) is disordered. The span at 716–725 (PRYEDSDKPF) shows a compositional bias: basic and acidic residues. Lysine 723 participates in a covalent cross-link: Glycyl lysine isopeptide (Lys-Gly) (interchain with G-Cter in SUMO2). Serine 777 is subject to Phosphoserine. Phosphothreonine is present on threonine 785. Serine 794 bears the Phosphoserine mark. Asymmetric dimethylarginine occurs at positions 805, 820, and 833. The residue at position 851 (serine 851) is a Phosphoserine. Residues 921–940 (HGPSGAAIRFDGPHGQPGGG) form a disordered region. Asymmetric dimethylarginine occurs at positions 929, 944, 957, 982, 995, 1008, 1092, and 1103. Lysine 1276 participates in a covalent cross-link: Glycyl lysine isopeptide (Lys-Gly) (interchain with G-Cter in SUMO2). The disordered stretch occupies residues 1286 to 1313 (DSATAQVTEAVAQPPPEEDEDQNEDQDV). Residues 1301 to 1313 (PEEDEDQNEDQDV) show a composition bias toward acidic residues. Residues lysine 1417, lysine 1509, lysine 1522, and lysine 1544 each participate in a glycyl lysine isopeptide (Lys-Gly) (interchain with G-Cter in SUMO2) cross-link. The disordered stretch occupies residues 1516–1553 (CESPKVKEEQIDAPPACSEESVATPTEIKTESDTVESV).

In terms of assembly, associates with the phosphorylated CTD domain of POLR2A /RNA polymerase II. In terms of processing, phosphorylation at Ser-120 and/or Thr-121 by WNK1 weakens its association with POLR2A/RNA polymerase II, promoting transcript release from the chromatin template and mRNA export to the cytoplasm.

It is found in the nucleus. In terms of biological role, component of pre-mRNA cleavage complex II, which promotes transcription termination by RNA polymerase II. The sequence is that of Pre-mRNA cleavage complex 2 protein Pcf11 from Mus musculus (Mouse).